The following is a 670-amino-acid chain: Aurofusarin cluster transcription factor aurR2 (670 aa).

Positions 12–38 (CVPCQHRKIRCNGQTPCAYCIRTGKEC) form a DNA-binding region, zn(2)-C6 fungal-type. Disordered stretches follow at residues 57–76 (RLTA…IVSG) and 92–115 (GDEM…RTDT). A compositionally biased stretch (basic and acidic residues) spans 92–113 (GDEMQGKDVSPDPERPPLRTRT).

The protein localises to the nucleus. Functionally, transcription factor that may participate in the regulation of the expression of the gene cluster that mediates the biosynthesis of aurofusarin, a red mycelium pigment which is acting as a mycotoxin. This is Aurofusarin cluster transcription factor aurR2 from Gibberella zeae (strain ATCC MYA-4620 / CBS 123657 / FGSC 9075 / NRRL 31084 / PH-1) (Wheat head blight fungus).